The primary structure comprises 472 residues: Lactate utilization protein B (472 aa).

4Fe-4S ferredoxin-type domains lie at 304-334 (GTEFQPVLQCIRCAACVNVCPVYRHIGGHSY) and 353-382 (YDDYKELPYASTLCAACTEACPVKIPLHEL). 7 residues coordinate [4Fe-4S] cluster: Cys313, Cys316, Cys319, Cys323, Cys366, Cys369, and Cys373.

Belongs to the LutB/YkgF family.

Its function is as follows. Is involved in L-lactate degradation and allows cells to grow with lactate as the sole carbon source. Has probably a role as an electron transporter during oxidation of L-lactate. The sequence is that of Lactate utilization protein B from Anoxybacillus flavithermus (strain DSM 21510 / WK1).